The chain runs to 257 residues: Type III pantothenate kinase (257 aa).

6–13 (DVGNTNTV) is a binding site for ATP. Residues Y100 and 107 to 110 (GADR) contribute to the substrate site. Residue D109 is the Proton acceptor of the active site. D129 is a binding site for K(+). T132 provides a ligand contact to ATP. T185 is a substrate binding site.

Belongs to the type III pantothenate kinase family. In terms of assembly, homodimer. It depends on NH4(+) as a cofactor. K(+) is required as a cofactor.

Its subcellular location is the cytoplasm. It catalyses the reaction (R)-pantothenate + ATP = (R)-4'-phosphopantothenate + ADP + H(+). Its pathway is cofactor biosynthesis; coenzyme A biosynthesis; CoA from (R)-pantothenate: step 1/5. Catalyzes the phosphorylation of pantothenate (Pan), the first step in CoA biosynthesis. In Desulfatibacillum aliphaticivorans, this protein is Type III pantothenate kinase.